The primary structure comprises 115 residues: Nascent polypeptide-associated complex protein (115 aa).

The NAC-A/B domain maps to 6-72 (PMNPKQLKKL…SEEEKAIINI (67 aa)).

It belongs to the NAC-alpha family. In terms of assembly, homodimer. Interacts with the ribosome. Binds ribosomal RNA.

Its function is as follows. Contacts the emerging nascent chain on the ribosome. In Pyrococcus horikoshii (strain ATCC 700860 / DSM 12428 / JCM 9974 / NBRC 100139 / OT-3), this protein is Nascent polypeptide-associated complex protein.